A 374-amino-acid chain; its full sequence is Phosphomevalonate kinase (374 aa).

Belongs to the GHMP kinase family. In terms of assembly, homodimer. Requires Mg(2+) as cofactor.

The enzyme catalyses (R)-5-phosphomevalonate + ATP = (R)-5-diphosphomevalonate + ADP. It functions in the pathway isoprenoid biosynthesis; isopentenyl diphosphate biosynthesis via mevalonate pathway; isopentenyl diphosphate from (R)-mevalonate: step 2/3. In terms of biological role, catalyzes the phosphorylation of (R)-mevalonate 5-phosphate (MVAP) to (R)-mevalonate 5-diphosphate (MVAPP). Functions in the mevalonate (MVA) pathway leading to isopentenyl diphosphate (IPP), a key precursor for the biosynthesis of isoprenoid compounds. This Streptomyces sp. (strain CL190) protein is Phosphomevalonate kinase.